A 312-amino-acid polypeptide reads, in one-letter code: Aspartate carbamoyltransferase catalytic subunit (312 aa).

Residues R58 and T59 each contribute to the carbamoyl phosphate site. An L-aspartate-binding site is contributed by K86. Carbamoyl phosphate is bound by residues R108, H136, and Q139. 2 residues coordinate L-aspartate: R169 and R223. Positions 264 and 265 each coordinate carbamoyl phosphate.

It belongs to the aspartate/ornithine carbamoyltransferase superfamily. ATCase family. Heterododecamer (2C3:3R2) of six catalytic PyrB chains organized as two trimers (C3), and six regulatory PyrI chains organized as three dimers (R2).

The enzyme catalyses carbamoyl phosphate + L-aspartate = N-carbamoyl-L-aspartate + phosphate + H(+). It functions in the pathway pyrimidine metabolism; UMP biosynthesis via de novo pathway; (S)-dihydroorotate from bicarbonate: step 2/3. Functionally, catalyzes the condensation of carbamoyl phosphate and aspartate to form carbamoyl aspartate and inorganic phosphate, the committed step in the de novo pyrimidine nucleotide biosynthesis pathway. The sequence is that of Aspartate carbamoyltransferase catalytic subunit from Desulfitobacterium hafniense (strain DSM 10664 / DCB-2).